A 388-amino-acid polypeptide reads, in one-letter code: Fructose-bisphosphate aldolase, chloroplastic (388 aa).

The transit peptide at 1–38 (MASATLLKSSFLPKKSEWGATRQAAAPKPVTVSMVVRA) directs the protein to the chloroplast. R72 contacts substrate. E215 (proton acceptor) is an active-site residue. Catalysis depends on K257, which acts as the Schiff-base intermediate with dihydroxyacetone-P. Substrate-binding positions include 299-301 (SGG) and R329.

The protein belongs to the class I fructose-bisphosphate aldolase family. In terms of assembly, homotetramer. As to expression, expressed in leaf mesophyll cells.

The protein resides in the plastid. It is found in the chloroplast. The protein localises to the plastoglobule. The enzyme catalyses beta-D-fructose 1,6-bisphosphate = D-glyceraldehyde 3-phosphate + dihydroxyacetone phosphate. It participates in carbohydrate degradation; glycolysis; D-glyceraldehyde 3-phosphate and glycerone phosphate from D-glucose: step 4/4. Functionally, plays a key role in glycolysis and gluconeogenesis. This Oryza sativa subsp. japonica (Rice) protein is Fructose-bisphosphate aldolase, chloroplastic.